A 397-amino-acid polypeptide reads, in one-letter code: Nuclear egress protein 2 (397 aa).

The Perinuclear space portion of the chain corresponds to 1-358 (MEMNKVLHQD…GPSRPQSGPW (358 aa)). 2 disordered regions span residues 205-245 (RTAG…PPPP) and 291-332 (AAAG…PSLE). Position 216 is a phosphoserine (Ser216). 2 stretches are compositionally biased toward low complexity: residues 224 to 239 (PSCSPTMVAAGGAAAG) and 291 to 301 (AAAGQDVGGSA). Basic residues predominate over residues 310-322 (SRRRGVSTHHRHP). The chain crosses the membrane as a helical span at residues 359–381 (LPARFATLGPLVLALLLVLALLW). The Nuclear segment spans residues 382–397 (RGHGQSSSPTRSAHRD).

This sequence belongs to the herpesviridae NEC2 protein family. As to quaternary structure, forms a heterohexameric complex with NEC1. Interacts with host UBA7 and RNF170; this interaction promotes UBA7 proteasomal degradation. Post-translationally, phosphorylated. Phosphorylation by viral kinase UL97 at Ser-216 plays an important role for correct viral nuclear egress complex (NEC) localization.

Its subcellular location is the host nucleus inner membrane. Plays an essential role in virion nuclear egress, the first step of virion release from infected cell. Within the host nucleus, NEC1 interacts with the newly formed capsid through the vertexes and directs it to the inner nuclear membrane by associating with NEC2. Induces the budding of the capsid at the inner nuclear membrane as well as its envelopment into the perinuclear space. There, the NEC1/NEC2 complex promotes the fusion of the enveloped capsid with the outer nuclear membrane and the subsequent release of the viral capsid into the cytoplasm where it will reach the secondary budding sites in the host Golgi or trans-Golgi network. Inhibits host ISGylation and subsequent innate antiviral response by targeting host UBA7 for proteasomal degradation. This chain is Nuclear egress protein 2, found in Human cytomegalovirus (strain AD169) (HHV-5).